The following is a 655-amino-acid chain: Broad substrate specificity ATP-binding cassette transporter ABCG2 (655 aa).

Topologically, residues 1–395 (MSSNSYEVSI…KNLLGNPQAS (395 aa)) are cytoplasmic. The 250-residue stretch at 36 to 285 (LSFHNICYRV…FGAIGFRCEP (250 aa)) folds into the ABC transporter domain. Residues 79 to 86 (GPTGGGKS), 183 to 189 (RGVSGGE), E210, and H242 each bind ATP. The ABC transmembrane type-2 domain maps to 389–651 (LGNPQASIAQ…TIAYLKLLFL (263 aa)). The helical transmembrane segment at 396–416 (IAQLIVTVFLGLVIGAIFYDL) threads the bilayer. Residues 417 to 428 (KNDPAGIQNRAG) lie on the Extracellular side of the membrane. Residues 429–449 (VLFFLTTNQCFSSVSAVELLV) traverse the membrane as a helical segment. Residues 450–477 (VEKKLFIHEYISGYYRVSSYFFGKLLSD) are Cytoplasmic-facing. A helical membrane pass occupies residues 478-498 (LLPMRMLPSIIFTCITYFLLG). Residues 499 to 506 (LKPKVEAF) lie on the Extracellular side of the membrane. Residues 507–527 (FIMMLTLMMVAYSASSMALAI) traverse the membrane as a helical segment. The Cytoplasmic portion of the chain corresponds to 528–535 (AAGQSVVS). Residues 536-556 (IATLLMTISFVFMMIFSGLLV) traverse the membrane as a helical segment. The Extracellular segment spans residues 557–630 (NLKTVVPWLS…ISPWGLWKNH (74 aa)). Residues C592 and C608 are joined by a disulfide bond. 2 N-linked (GlcNAc...) asparagine glycosylation sites follow: N596 and N600. Residues 631-651 (VALACMIVIFLTIAYLKLLFL) form a helical membrane-spanning segment. Over 652-655 (KKFS) the chain is Cytoplasmic.

Belongs to the ABC transporter superfamily. ABCG family. Eye pigment precursor importer (TC 3.A.1.204) subfamily. In terms of assembly, homodimer; disulfide-linked. The minimal functional unit is a homodimer, but the major oligomeric form in plasma membrane is a homotetramer with possibility of higher order oligomerization up to homododecamers. In terms of processing, N-glycosylated. Glycosylation-deficient ABCG2 is normally expressed and functional. Post-translationally, phosphorylated. Phosphorylation may regulate the localization to the plasma membrane, the homooligomerization and therefore, the activity of the transporter.

It localises to the cell membrane. Its subcellular location is the apical cell membrane. It is found in the mitochondrion membrane. It catalyses the reaction ATP + H2O + xenobioticSide 1 = ADP + phosphate + xenobioticSide 2.. The catalysed reaction is urate(in) + ATP + H2O = urate(out) + ADP + phosphate + H(+). The enzyme catalyses indoxyl sulfate(in) + ATP + H2O = indoxyl sulfate(out) + ADP + phosphate + H(+). It carries out the reaction sphing-4-enine 1-phosphate(in) + ATP + H2O = sphing-4-enine 1-phosphate(out) + ADP + phosphate + H(+). It catalyses the reaction estrone 3-sulfate(in) + ATP + H2O = estrone 3-sulfate(out) + ADP + phosphate + H(+). The catalysed reaction is dehydroepiandrosterone 3-sulfate(in) + ATP + H2O = dehydroepiandrosterone 3-sulfate(out) + ADP + phosphate + H(+). The enzyme catalyses 4-methylumbelliferone sulfate(in) + ATP + H2O = 4-methylumbelliferone sulfate(out) + ADP + phosphate + H(+). It carries out the reaction 5,7-dimethyl-2-methylamino-4-(3-pyridylmethyl)-1,3-benzothiazol-6-yl beta-D-glucuronate(in) + ATP + H2O = 5,7-dimethyl-2-methylamino-4-(3-pyridylmethyl)-1,3-benzothiazol-6-yl beta-D-glucuronate(out) + ADP + phosphate + H(+). It catalyses the reaction 4-methylumbelliferone beta-D-glucuronate(in) + ATP + H2O = 4-methylumbelliferone beta-D-glucuronate(out) + ADP + phosphate + H(+). The catalysed reaction is 5,7-dimethyl-2-methylamino-4-(3-pyridylmethyl)-1,3-benzothiazol-6-yl sulfate(in) + ATP + H2O = 5,7-dimethyl-2-methylamino-4-(3-pyridylmethyl)-1,3-benzothiazol-6-yl sulfate(out) + ADP + phosphate + H(+). The enzyme catalyses 17beta-estradiol 17-O-(beta-D-glucuronate)(in) + ATP + H2O = 17beta-estradiol 17-O-(beta-D-glucuronate)(out) + ADP + phosphate + H(+). It carries out the reaction methotrexate(in) + ATP + H2O = methotrexate(out) + ADP + phosphate + H(+). It catalyses the reaction riboflavin(in) + ATP + H2O = riboflavin(out) + ADP + phosphate + H(+). The catalysed reaction is pheophorbide a(in) + ATP + H2O = pheophorbide a(out) + ADP + phosphate + H(+). The enzyme catalyses itaconate(in) + ATP + H2O = itaconate(out) + ADP + phosphate + H(+). Broad substrate specificity ATP-dependent transporter of the ATP-binding cassette (ABC) family that actively extrudes a wide variety of physiological compounds, dietary toxins and xenobiotics from cells. Involved in porphyrin homeostasis, mediating the export of protoporphyrin IX (PPIX) from both mitochondria to cytosol and cytosol to extracellular space, it also functions in the cellular export of heme. Also mediates the efflux of sphingosine-1-P from cells. Acts as a urate exporter functioning in both renal and extrarenal urate excretion. In kidney, it also functions as a physiological exporter of the uremic toxin indoxyl sulfate. Also involved in the excretion of steroids like estrone 3-sulfate/E1S, 3beta-sulfooxy-androst-5-en-17-one/DHEAS, and other sulfate conjugates. Mediates the secretion of the riboflavin and biotin vitamins into milk. Extrudes pheophorbide a, a phototoxic porphyrin catabolite of chlorophyll, reducing its bioavailability. Plays an important role in the exclusion of xenobiotics from the brain. It confers to cells a resistance to multiple drugs and other xenobiotics including mitoxantrone, pheophorbide, camptothecin, methotrexate, azidothymidine, and the anthracyclines daunorubicin and doxorubicin, through the control of their efflux. In placenta, it limits the penetration of drugs from the maternal plasma into the fetus. May play a role in early stem cell self-renewal by blocking differentiation. In inflammatory macrophages, exports itaconate from the cytosol to the extracellular compartment and limits the activation of TFEB-dependent lysosome biogenesis involved in antibacterial innate immune response. The sequence is that of Broad substrate specificity ATP-binding cassette transporter ABCG2 (ABCG2) from Bos taurus (Bovine).